The sequence spans 857 residues: DNA gyrase subunit A (857 aa).

The Topo IIA-type catalytic domain occupies 39-507 (LPDVRDGLKP…YEGDMSIEDL (469 aa)). Y127 functions as the O-(5'-phospho-DNA)-tyrosine intermediate in the catalytic mechanism. Residues 534 to 540 (QKRGGKG) carry the GyrA-box motif. Positions 825–857 (REAEEVDGDVAVDETAEGAATTGTDEGEAPSAE) are disordered. Acidic residues predominate over residues 828–840 (EEVDGDVAVDETA).

This sequence belongs to the type II topoisomerase GyrA/ParC subunit family. As to quaternary structure, heterotetramer, composed of two GyrA and two GyrB chains. In the heterotetramer, GyrA contains the active site tyrosine that forms a transient covalent intermediate with DNA, while GyrB binds cofactors and catalyzes ATP hydrolysis.

Its subcellular location is the cytoplasm. It carries out the reaction ATP-dependent breakage, passage and rejoining of double-stranded DNA.. Its function is as follows. A type II topoisomerase that negatively supercoils closed circular double-stranded (ds) DNA in an ATP-dependent manner to modulate DNA topology and maintain chromosomes in an underwound state. Negative supercoiling favors strand separation, and DNA replication, transcription, recombination and repair, all of which involve strand separation. Also able to catalyze the interconversion of other topological isomers of dsDNA rings, including catenanes and knotted rings. Type II topoisomerases break and join 2 DNA strands simultaneously in an ATP-dependent manner. The chain is DNA gyrase subunit A from Streptomyces coelicolor (strain ATCC BAA-471 / A3(2) / M145).